The primary structure comprises 417 residues: 4-hydroxy-3-methylbut-2-en-1-yl diphosphate synthase (flavodoxin) (417 aa).

Residues C307, C310, C353, and E360 each coordinate [4Fe-4S] cluster.

Belongs to the IspG family. [4Fe-4S] cluster serves as cofactor.

The enzyme catalyses (2E)-4-hydroxy-3-methylbut-2-enyl diphosphate + oxidized [flavodoxin] + H2O + 2 H(+) = 2-C-methyl-D-erythritol 2,4-cyclic diphosphate + reduced [flavodoxin]. The protein operates within isoprenoid biosynthesis; isopentenyl diphosphate biosynthesis via DXP pathway; isopentenyl diphosphate from 1-deoxy-D-xylulose 5-phosphate: step 5/6. Converts 2C-methyl-D-erythritol 2,4-cyclodiphosphate (ME-2,4cPP) into 1-hydroxy-2-methyl-2-(E)-butenyl 4-diphosphate. The protein is 4-hydroxy-3-methylbut-2-en-1-yl diphosphate synthase (flavodoxin) of Xylella fastidiosa (strain 9a5c).